Consider the following 845-residue polypeptide: Beta-galactosidase 11 (845 aa).

The first 26 residues, 1–26 (MRKHSLDRWLLTAVLVVLLSSSSSFA), serve as a signal peptide directing secretion. Asn104 carries an N-linked (GlcNAc...) asparagine glycan. Residue Glu197 is the Proton donor of the active site. Glu268 serves as the catalytic Nucleophile. 6 N-linked (GlcNAc...) asparagine glycosylation sites follow: Asn269, Asn300, Asn395, Asn752, Asn784, and Asn814. Residues 751 to 840 (DNVSLTATLK…KMLAVQVKCG (90 aa)) enclose the SUEL-type lectin domain.

It belongs to the glycosyl hydrolase 35 family.

It is found in the secreted. It localises to the extracellular space. The protein resides in the apoplast. The catalysed reaction is Hydrolysis of terminal non-reducing beta-D-galactose residues in beta-D-galactosides.. The protein is Beta-galactosidase 11 (BGAL11) of Arabidopsis thaliana (Mouse-ear cress).